Consider the following 500-residue polypeptide: Cryptochrome DASH (500 aa).

The region spanning 4 to 138 is the Photolyase/cryptochrome alpha/beta domain; the sequence is KTVLVWYRND…PVRSFWGTTL (135 aa).

This sequence belongs to the DNA photolyase class-1 family. Requires FAD as cofactor. (6R)-5,10-methylene-5,6,7,8-tetrahydrofolate is required as a cofactor.

May have a photoreceptor function. Binds DNA; probably functions as a transcriptional repressor. This is Cryptochrome DASH (cry) from Gloeobacter violaceus (strain ATCC 29082 / PCC 7421).